The primary structure comprises 82 residues: Small ribosomal subunit protein bS16 (82 aa).

This sequence belongs to the bacterial ribosomal protein bS16 family.

The polypeptide is Small ribosomal subunit protein bS16 (Francisella tularensis subsp. holarctica (strain FTNF002-00 / FTA)).